Consider the following 310-residue polypeptide: Lymphotoxin-beta (310 aa).

Residues 1-27 (MGALGLQGRGGRPQGTGCLLLAVAGAT) are Cytoplasmic-facing. A helical; Signal-anchor for type II membrane protein membrane pass occupies residues 28–48 (SLVTLLLAVPITVLAVLALVP). Topologically, residues 49–310 (QEQGGLVMES…LGKCLHSANV (262 aa)) are extracellular. The disordered stretch occupies residues 67–86 (QGLSKSNGLPSRLHSQIPSS). Residues 138–293 (PAAHLIGAWM…GKTFFGAVMV (156 aa)) enclose the THD domain. Residue N272 is glycosylated (N-linked (GlcNAc...) asparagine).

This sequence belongs to the tumor necrosis factor family. As to quaternary structure, heterotrimer of either two LTB and one LTA subunits or (less prevalent) two LTA and one LTB subunits.

It is found in the membrane. Cytokine that binds to LTBR/TNFRSF3. May play a specific role in immune response regulation. Provides the membrane anchor for the attachment of the heterotrimeric complex to the cell surface. This Marmota monax (Woodchuck) protein is Lymphotoxin-beta (LTB).